The sequence spans 282 residues: Pantothenate synthetase (282 aa).

29–36 (MGFLHEGH) is a binding site for ATP. The Proton donor role is filled by histidine 36. Position 60 (glutamine 60) interacts with (R)-pantoate. Residue glutamine 60 participates in beta-alanine binding. Residue 146–149 (GEKD) coordinates ATP. Residue glutamine 152 coordinates (R)-pantoate. ATP is bound by residues isoleucine 175 and 183–186 (KSSR).

This sequence belongs to the pantothenate synthetase family. In terms of assembly, homodimer.

It localises to the cytoplasm. The catalysed reaction is (R)-pantoate + beta-alanine + ATP = (R)-pantothenate + AMP + diphosphate + H(+). Its pathway is cofactor biosynthesis; (R)-pantothenate biosynthesis; (R)-pantothenate from (R)-pantoate and beta-alanine: step 1/1. Catalyzes the condensation of pantoate with beta-alanine in an ATP-dependent reaction via a pantoyl-adenylate intermediate. This chain is Pantothenate synthetase, found in Clostridioides difficile (strain 630) (Peptoclostridium difficile).